A 524-amino-acid polypeptide reads, in one-letter code: Homeobox protein engrailed-like SMOX-2 (524 aa).

Residues 194 to 218 are disordered; that stretch reads SSSSSSSSSSSSSSSSSSCSTNSSS. Residues 423 to 482 constitute a DNA-binding region (homeobox); that stretch reads LKRPRTSFTVPQLKRLSQEFEKNRYLDELRRKKLATELDLRESQVKIWFQNKRAKTKKAS.

Belongs to the engrailed homeobox family.

It localises to the nucleus. The sequence is that of Homeobox protein engrailed-like SMOX-2 (SMOX-2) from Schistosoma mansoni (Blood fluke).